The sequence spans 145 residues: Putative pre-16S rRNA nuclease (145 aa).

It belongs to the YqgF nuclease family.

Its subcellular location is the cytoplasm. Functionally, could be a nuclease involved in processing of the 5'-end of pre-16S rRNA. This is Putative pre-16S rRNA nuclease from Tropheryma whipplei (strain Twist) (Whipple's bacillus).